The following is a 714-amino-acid chain: A-kinase anchor protein 5 (714 aa).

2 disordered regions span residues 1 to 146 (METS…GYVR) and 243 to 333 (VLEN…VGHT). An essential to the intracellular anchoring function region spans residues 1–164 (METSVSEIQI…EIKAQIQPDE (164 aa)). Residues Ser-4 and Ser-22 each carry the phosphoserine modification. The segment covering 10-32 (IETKDEKRPEAASPQKERQERKT) has biased composition (basic and acidic residues). The S-palmitoyl cysteine moiety is linked to residue Cys-36. Residues 37–50 (FKRRKKVNKKKAKA) show a composition bias toward basic residues. Composition is skewed to basic and acidic residues over residues 54 to 63 (TAEETEKHAP) and 88 to 100 (KPSESAEKQKPSE). Residues 74–94 (AGAWASIKRLVTHRKPSESAE) carry the AKAP CaM-binding motif. Cys-123 carries the S-palmitoyl cysteine lipid modification. Polar residues predominate over residues 243-268 (VLENSAADSPQPVTSTAPLSPATTHQ). The span at 285–301 (GKDDGRRKTAAEEKKSG) shows a compositional bias: basic and acidic residues. The stretch at 305 to 312 (LGQAEEAS) is one 1; approximate repeat. Positions 305–597 (LGQAEEASSV…PIVGQAEETV (293 aa)) are 28 X 8 AA repeats of V-G-Q-A-E-E-A-T. A compositionally biased stretch (polar residues) spans 310–323 (EASSVSQADKSVLS). The stretch at 322 to 329 (LSQAEEAT) is one 2; approximate repeat. Residues 330-337 (VGHTEEAT) form a 3; approximate repeat. Residues 350–357 (LSQAEEAT) form a 4; approximate repeat. The 5; approximate repeat unit spans residues 358–365 (VAQAKETV). Residues 366-373 (LSQAEEVK) form a 6; approximate repeat. The stretch at 398–405 (VSQAEEAI) is one 7; approximate repeat. The stretch at 414–421 (MGQAEEAT) is one 8; approximate repeat. 5 tandem repeats follow at residues 430–437 (VGQAEEAT), 438–445 (VGQAEEAT), 446–453 (VGQAEEAT), 454–461 (VGQAEEAT), and 462–469 (VGQAEEAT). The 14; approximate repeat unit spans residues 470–477 (VGQAGEAT). Residues 486-493 (VGQAEEAI) form a 15; approximate repeat. Tandem repeats lie at residues 494–501 (VGQAEEAT), 502–509 (VGQAEEAT), 510–517 (VGQAEEAT), and 518–525 (VGQAEEAT). The stretch at 526-533 (VDQAEEAT) is one 20; approximate repeat. The stretch at 534–541 (VGQAEEAT) is repeat 21. A 22; approximate repeat occupies 542–549 (VGQAGEAA). The stretch at 550–557 (VGQAEEAI) is one 23; approximate repeat. One copy of the 24; approximate repeat lies at 558–565 (VAQAEEAT). The stretch at 566-573 (VGQAGEAT) is repeat 25. The 26; approximate repeat unit spans residues 574 to 581 (VGQAEKAT). The 27; approximate repeat unit spans residues 582-589 (VGQAEEPI). Residues 590–597 (VGQAEETV) form a 28; approximate repeat. The tract at residues 675–696 (YETLLIETASSLVKNAIELSVE) is RII-beta subunit binding domain. The interval 697–714 (QLVNEMVSEDNQINTLFQ) is tethers NFATC2 to CRAC channels.

As to quaternary structure, binding protein for dimer of the RII-beta regulatory subunit of cAMP-dependent protein kinase (PKA) and also for the protein kinase C (PKC) and the phosphatase calcineurin (PP2B). Each enzyme is inhibited when bound to the anchoring protein. Also binds the beta2-adrenergic receptor. Part of a complex containing AKAP5, ADCY5, ADCY6 and PDE4C. Interacts with ADCY8, and enhances its phosphorylation at lipid rafts. Interacts with ORAI1 (isoform alpha) (via N-terminus) upon store depletion and in response to LTC4. Does not interact with ORAI2 and ORAI3 paralogs. Interacts (via leucine zipper domain) with NFATC2/NFAT1. Interacts with calmodulin; the interaction is calcium-independent. Interacts with KCNQ2; the interaction may help KCNQ2 channel complex to retain calcium-bound calmodulin. Interacts with KCNK2; the channel is recruited to postsynaptic microdomains by AKAP5 where it can integrate neurotransmitter receptor signals. Part of a complex composed of AKAP5 and ADRB2. In terms of processing, palmitoylated. Palmitoylation at Cys-36 and Cys-123 plays a key role in the targeting of AKAP5 to lipid rafts. Palmitoylation by ZDHHC2 is required for AKAP5 function in LTP-stimulated recycling endosome exocytosis.

The protein localises to the postsynaptic recycling endosome membrane. Its subcellular location is the cell projection. The protein resides in the dendrite. It is found in the postsynaptic cell membrane. In terms of biological role, multivalent scaffold protein that anchors the cAMP-dependent protein kinase/PKA to cytoskeletal and/or organelle-associated proteins, targeting the signal carried by cAMP to specific intracellular effectors. Association with the beta2-adrenergic receptor (beta2-AR) not only regulates beta2-AR signaling pathway, but also the activation by PKA by switching off the beta2-AR signaling cascade. Plays a role in long term synaptic potentiation by regulating protein trafficking from the dendritic recycling endosomes to the plasma membrane and controlling both structural and functional plasticity at excitatory synapses. In hippocampal pyramidal neurons, recruits KCNK2/TREK-1 channel at postsynaptic dense bodies microdomains and converts it to a leak channel no longer sensitive to stimulation by arachidonic acid, acidic pH or mechanical stress, nor inhibited by Gq-coupled receptors but still under the negative control of Gs-coupled receptors. Associates with ORAI1 pore-forming subunit of CRAC channels in Ca(2+) signaling microdomains where it recruits NFATC2/NFAT1 and couples store-operated Ca(2+) influx to calmodulin and calcineurin signaling and activation of NFAT-dependent transcriptional responses. The chain is A-kinase anchor protein 5 (Akap5) from Rattus norvegicus (Rat).